The sequence spans 1069 residues: Rab GTPase-activating protein 1 (1069 aa).

A disordered region spans residues 1–79; the sequence is MDDKASVGKI…DPPMDDQPGE (79 aa). The segment covering 7–22 has biased composition (low complexity); sequence VGKISVSSDSVSTLNS. At S42 the chain carries Phosphoserine. The 157-residue stretch at 142-298 folds into the PID domain; the sequence is EDSVVFSKLT…IFTFSVSLEI (157 aa). S360 carries the phosphoserine modification. Residues 482–527 are disordered; the sequence is ERERRKTTASPSVRLPQSGSQSSVIPSPPEDDEEEDNDEPLLSGSG. Residues 489 to 506 are compositionally biased toward polar residues; that stretch reads TASPSVRLPQSGSQSSVI. Positions 510–520 are enriched in acidic residues; the sequence is PEDDEEEDNDE. The 187-residue stretch at 566 to 752 folds into the Rab-GAP TBC domain; it reads GVPEALRGEV…HIIDLLLCEG (187 aa). Positions 798–1047 form a coiled coil; sequence KKLMELACNM…ALNEVQAAKK (250 aa). T996 carries the post-translational modification Phosphothreonine.

Interacts with RAB6A and tubulin gamma.

It localises to the cytoplasm. The protein resides in the cytosol. Its subcellular location is the cytoskeleton. The protein localises to the microtubule organizing center. It is found in the centrosome. May act as a GTPase-activating protein of RAB6A. May play a role in microtubule nucleation by centrosome. May participate in a RAB6A-mediated pathway involved in the metaphase-anaphase transition. The sequence is that of Rab GTPase-activating protein 1 (RABGAP1) from Homo sapiens (Human).